The sequence spans 407 residues: BTB/POZ and MATH domain-containing protein 1 (407 aa).

In terms of domain architecture, MATH spans 33 to 167 (NGFHEFKICG…ENSLLVRCRV (135 aa)). One can recognise a BTB domain in the interval 203–270 (CDVVFQVDGE…IYWDELPDMQ (68 aa)).

The protein belongs to the Tdpoz family. As to quaternary structure, homodimer or heterodimer with BPM3, BPM5 and BPM6. Interacts with CUL3A and CUL3B. Interacts with RAP2-4 and RAP2-13. Binds to MYB56 at the promoter of FLOWERING LOCUS T (FT). In terms of tissue distribution, ubiquitous.

The protein localises to the nucleus. Its pathway is protein modification; protein ubiquitination. Its function is as follows. May act as a substrate-specific adapter of an E3 ubiquitin-protein ligase complex (CUL3-RBX1-BTB) which mediates the ubiquitination and subsequent proteasomal degradation of target proteins. The chain is BTB/POZ and MATH domain-containing protein 1 (BPM1) from Arabidopsis thaliana (Mouse-ear cress).